The primary structure comprises 134 residues: Global transcriptional regulator Spx (134 aa).

Cysteine 10 and cysteine 13 are oxidised to a cystine.

It belongs to the ArsC family. Spx subfamily. In terms of assembly, interacts with the C-terminal domain of the alpha subunit of the RNAP.

Its subcellular location is the cytoplasm. Functionally, global transcriptional regulator that plays a key role in stress response and exerts either positive or negative regulation of genes. Acts by interacting with the C-terminal domain of the alpha subunit of the RNA polymerase (RNAP). This interaction can enhance binding of RNAP to the promoter region of target genes and stimulate their transcription, or block interaction of RNAP with activator. The protein is Global transcriptional regulator Spx of Streptococcus pyogenes serotype M3 (strain ATCC BAA-595 / MGAS315).